We begin with the raw amino-acid sequence, 156 residues long: Small ribosomal subunit protein uS7 (156 aa).

Belongs to the universal ribosomal protein uS7 family. As to quaternary structure, part of the 30S ribosomal subunit. Contacts proteins S9 and S11.

Its function is as follows. One of the primary rRNA binding proteins, it binds directly to 16S rRNA where it nucleates assembly of the head domain of the 30S subunit. Is located at the subunit interface close to the decoding center, probably blocks exit of the E-site tRNA. This chain is Small ribosomal subunit protein uS7, found in Staphylococcus saprophyticus subsp. saprophyticus (strain ATCC 15305 / DSM 20229 / NCIMB 8711 / NCTC 7292 / S-41).